The primary structure comprises 172 residues: UPF0316 protein Clos_0555 (172 aa).

The next 3 membrane-spanning stretches (helical) occupy residues 3–23 (ALLG…MATI), 34–54 (VIAA…IGKV), and 61–81 (PLNV…GIFL).

This sequence belongs to the UPF0316 family.

It localises to the cell membrane. The chain is UPF0316 protein Clos_0555 from Alkaliphilus oremlandii (strain OhILAs) (Clostridium oremlandii (strain OhILAs)).